The following is a 507-amino-acid chain: Hippocampus abundant transcript-like protein 1 (507 aa).

Residues 1–22 (MSTDGESPEEPGWKAVASPKAS) form a disordered region. The Extracellular segment spans residues 1 to 51 (MSTDGESPEEPGWKAVASPKASAMPEKRGSAQAASSSWLQGFGQPSVYHAA). A helical membrane pass occupies residues 52 to 72 (FVIFFEFFAWGLLTTPMLTVL). At 73-84 (HETFPQHTFLMN) the chain is on the cytoplasmic side. The helical transmembrane segment at 85–105 (GLIQGVKGLLSFLSAPLIGAL) threads the bilayer. The Extracellular portion of the chain corresponds to 106–113 (SDVWGRKP). The helical transmembrane segment at 114–134 (FLLGTVFFTCFPIPLMRISPW) threads the bilayer. At 135-136 (WY) the chain is on the cytoplasmic side. The helical transmembrane segment at 137 to 157 (FGMISVSGVFSVTFSVIFAYV) threads the bilayer. The Extracellular segment spans residues 158–170 (ADFTQEHERSTAY). A helical membrane pass occupies residues 171 to 191 (GWVSATFAASLVSSPAIGTYL). Over 192 to 198 (SSNYGDS) the chain is Cytoplasmic. A helical membrane pass occupies residues 199-219 (LVVLVATVVALLDICFILVAV). Over 220–257 (PESLPEKIRPASWGAQISWKQADPFASLKKVGKDSTVL) the chain is Extracellular. Residues 258 to 278 (LICITVFLSYLPEAGQYSSFF) traverse the membrane as a helical segment. Over 279-283 (LYLRQ) the chain is Cytoplasmic. The helical transmembrane segment at 284 to 304 (VIGFGSVKIVAFIAMVGILSI) threads the bilayer. Residues 305 to 323 (LAQTVFLSKLMRSLGNKNT) are Extracellular-facing. A helical transmembrane segment spans residues 324-344 (VLLGLGFQILQLAWYGFGAQA). Residues 345–347 (WMM) are Cytoplasmic-facing. The chain crosses the membrane as a helical span at residues 348 to 368 (WAAGTVAAMSSITFPAVSALI). At 369–389 (SRNAESDQQGVAQGIITGIRG) the chain is on the extracellular side. The helical transmembrane segment at 390 to 410 (LCNGLGPALYGFIFYLFHVEL) threads the bilayer. The Cytoplasmic portion of the chain corresponds to 411-430 (NELGPKLDSDNDPLQGAFIP). The helical transmembrane segment at 431 to 451 (GPPFLFGACIVLMSFLVALFI) threads the bilayer. Residues 452 to 507 (PEYRKTGGVQKHNNSISGSLSTPPERGSDEDIEPLLQDSNIWELSSEEPGNQCTEL) lie on the Extracellular side of the membrane. Residues 462–473 (KHNNSISGSLST) show a composition bias toward polar residues. The interval 462-483 (KHNNSISGSLSTPPERGSDEDI) is disordered. The N-linked (GlcNAc...) asparagine glycan is linked to Asn-464.

Belongs to the major facilitator superfamily.

It is found in the membrane. This Rattus norvegicus (Rat) protein is Hippocampus abundant transcript-like protein 1.